The sequence spans 382 residues: Biotin synthase (382 aa).

Positions 83-318 (CCGNVVDLCS…EQILRYAGGR (236 aa)) constitute a Radical SAM core domain. Cys-101, Cys-105, and Cys-108 together coordinate [4Fe-4S] cluster. [2Fe-2S] cluster contacts are provided by Cys-146, Cys-183, Cys-243, and Arg-313.

It belongs to the radical SAM superfamily. Biotin synthase family. In terms of assembly, homodimer. The cofactor is [4Fe-4S] cluster. Requires [2Fe-2S] cluster as cofactor.

It carries out the reaction (4R,5S)-dethiobiotin + (sulfur carrier)-SH + 2 reduced [2Fe-2S]-[ferredoxin] + 2 S-adenosyl-L-methionine = (sulfur carrier)-H + biotin + 2 5'-deoxyadenosine + 2 L-methionine + 2 oxidized [2Fe-2S]-[ferredoxin]. The protein operates within cofactor biosynthesis; biotin biosynthesis; biotin from 7,8-diaminononanoate: step 2/2. Catalyzes the conversion of dethiobiotin (DTB) to biotin by the insertion of a sulfur atom into dethiobiotin via a radical-based mechanism. The chain is Biotin synthase from Crocosphaera subtropica (strain ATCC 51142 / BH68) (Cyanothece sp. (strain ATCC 51142)).